A 327-amino-acid chain; its full sequence is Lipoyl synthase (327 aa).

7 residues coordinate [4Fe-4S] cluster: C72, C77, C83, C98, C102, C105, and S313. One can recognise a Radical SAM core domain in the interval 83 to 302 (CWSHGTATIM…RKVGLEKGFL (220 aa)).

The protein belongs to the radical SAM superfamily. Lipoyl synthase family. [4Fe-4S] cluster is required as a cofactor.

It localises to the cytoplasm. The catalysed reaction is [[Fe-S] cluster scaffold protein carrying a second [4Fe-4S](2+) cluster] + N(6)-octanoyl-L-lysyl-[protein] + 2 oxidized [2Fe-2S]-[ferredoxin] + 2 S-adenosyl-L-methionine + 4 H(+) = [[Fe-S] cluster scaffold protein] + N(6)-[(R)-dihydrolipoyl]-L-lysyl-[protein] + 4 Fe(3+) + 2 hydrogen sulfide + 2 5'-deoxyadenosine + 2 L-methionine + 2 reduced [2Fe-2S]-[ferredoxin]. Its pathway is protein modification; protein lipoylation via endogenous pathway; protein N(6)-(lipoyl)lysine from octanoyl-[acyl-carrier-protein]: step 2/2. Its function is as follows. Catalyzes the radical-mediated insertion of two sulfur atoms into the C-6 and C-8 positions of the octanoyl moiety bound to the lipoyl domains of lipoate-dependent enzymes, thereby converting the octanoylated domains into lipoylated derivatives. The chain is Lipoyl synthase from Francisella tularensis subsp. novicida (strain U112).